Reading from the N-terminus, the 172-residue chain is Lectin (172 aa).

The signal sequence occupies residues 1–20; it reads MVWCLADLRAYVLVLLVISG. The C-type lectin domain occupies 36–172; the sequence is DCTPGWDCHF…ICKYTTPCRY (137 aa). 2 disulfides stabilise this stretch: cysteine 65–cysteine 164 and cysteine 140–cysteine 156. The N-linked (GlcNAc...) asparagine glycan is linked to asparagine 93.

As to quaternary structure, heterodimer. Anterior part of oviduct.

It localises to the secreted. May be involved in protection of eggs and embryos against microorganisms. Calcium-dependent lectin with specificity to D-glucose and D-glucosamine. Can agglutinate microorganisms in vivo. This is Lectin (LEC) from Pleurodeles waltl (Iberian ribbed newt).